The chain runs to 163 residues: HTH-type transcriptional regulator IscR (163 aa).

One can recognise an HTH rrf2-type domain in the interval 2-131; sequence RLTSKGRYAV…NNITLGELVN (130 aa). The segment at residues 28-51 is a DNA-binding region (H-T-H motif); sequence LADISERQGISLSYLEQLFSRLRK. Residues Cys92, Cys98, and Cys104 each coordinate [2Fe-2S] cluster.

[2Fe-2S] cluster is required as a cofactor.

In terms of biological role, regulates the transcription of several operons and genes involved in the biogenesis of Fe-S clusters and Fe-S-containing proteins. This is HTH-type transcriptional regulator IscR from Enterobacter sp. (strain 638).